We begin with the raw amino-acid sequence, 319 residues long: Malate dehydrogenase (319 aa).

NAD(+) contacts are provided by residues 10-15 and Asp34; that span reads GAGNIG. Substrate contacts are provided by Arg83 and Arg89. NAD(+)-binding positions include Asn96 and 119–121; that span reads ITN. The substrate site is built by Asn121 and Arg152. His176 serves as the catalytic Proton acceptor.

Belongs to the LDH/MDH superfamily. MDH type 3 family.

The enzyme catalyses (S)-malate + NAD(+) = oxaloacetate + NADH + H(+). In terms of biological role, catalyzes the reversible oxidation of malate to oxaloacetate. This is Malate dehydrogenase from Francisella tularensis subsp. tularensis (strain FSC 198).